Here is a 431-residue protein sequence, read N- to C-terminus: MAEITNIRPSFDVSPVVAGLIGASVLVVCVSVTVFVWSCCHQQAEKKQKNPPYKFIHMLKGISIYPETLSNKKKIIKVRRDKDGPGREGGRRNLLVDAAEAGLLSRDKDPRGPSSGSCIDQLPIKMDYGEELRSPITSLTPGESKTTSPSSPEEDVMLGSLTFSVDYNFPKKALVVTIQEAHGLPVMDDQTQGSDPYIKMTILPDKRHRVKTRVLRKTLDPVFDETFTFYGIPYSQLQDLVLHFLVLSFDRFSRDDVIGEVMVPLAGVDPSTGKVQLTRDIIKRNIQKCISRGELQVSLSYQPVAQRMTVVVLKARHLPKMDITGLSGNPYVKVNVYYGRKRIAKKKTHVKKCTLNPIFNESFIYDIPTDLLPDISIEFLVIDFDRTTKNEVVGRLILGAHSVTASGAEHWREVCESPRKPVAKWHSLSEY.

Topologically, residues 1–15 (MAEITNIRPSFDVSP) are vesicular. The chain crosses the membrane as a helical span at residues 16–36 (VVAGLIGASVLVVCVSVTVFV). At 37 to 431 (WSCCHQQAEK…VAKWHSLSEY (395 aa)) the chain is on the cytoplasmic side. Serine 134 is subject to Phosphoserine. A disordered region spans residues 134-154 (SPITSLTPGESKTTSPSSPEE). Residues 140–151 (TPGESKTTSPSS) are compositionally biased toward low complexity. 2 C2 domains span residues 157–279 (MLGS…QLTR) and 291–426 (SRGE…AKWH). The Ca(2+) site is built by aspartate 250, serine 253, and aspartate 256.

It belongs to the synaptotagmin family. As to quaternary structure, homodimer. Can also form heterodimers. Interacts with PRKN. Interacts (via C2 2 domain) with AGO2 and SND1; the interaction with SND1 is direct. Interacts with KIF1A; the interaction increases in presence of calcium. Requires Ca(2+) as cofactor. In terms of processing, ubiquitinated, at least by PRKN, and targeted to the proteasome complex for degradation. Ubiquitination is inhibited by ATP13A2.

Its subcellular location is the cytoplasmic vesicle membrane. The protein resides in the perikaryon. The protein localises to the golgi apparatus. It is found in the trans-Golgi network membrane. It localises to the recycling endosome membrane. Its subcellular location is the lysosome membrane. The protein resides in the cytoplasmic vesicle. The protein localises to the phagosome. It is found in the cell projection. It localises to the axon. Its subcellular location is the dendrite. The protein resides in the postsynaptic density. The protein localises to the clathrin-coated vesicle membrane. Its function is as follows. Synaptotagmin family member involved in vesicular and membrane trafficking which does not bind Ca(2+). Inhibits clathrin-mediated and bulk endocytosis, functions to ensure precision in vesicle retrieval. Plays an important role in dopamine transmission by regulating endocytosis and the vesicle-recycling process. Essential component of a neuronal vesicular trafficking pathway that differs from the synaptic vesicle trafficking pathway but is crucial for development and synaptic plasticity. In macrophages and microglia, inhibits the conventional cytokine secretion, of at least IL6 and TNF, and phagocytosis. In astrocytes, regulates lysosome exocytosis, mechanism required for the repair of injured astrocyte cell membrane. Required for the ATP13A2-mediated regulation of the autophagy-lysosome pathway. The protein is Synaptotagmin-11 of Homo sapiens (Human).